We begin with the raw amino-acid sequence, 254 residues long: Gamma-glutamyl-gamma-aminobutyrate hydrolase PuuD (254 aa).

The Glutamine amidotransferase type-1 domain occupies 16 to 250; that stretch reads RNRLKGHATQ…ITACQHHIAE (235 aa). Residue Cys114 is the Nucleophile of the active site. Active-site residues include His222 and Glu224.

Belongs to the peptidase C26 family. As to quaternary structure, homodimer.

It catalyses the reaction 4-(gamma-L-glutamylamino)butanoate + H2O = 4-aminobutanoate + L-glutamate. The protein operates within amine and polyamine degradation; putrescine degradation; 4-aminobutanoate from putrescine: step 4/4. Its function is as follows. Involved in the breakdown of putrescine via hydrolysis of the gamma-glutamyl linkage of gamma-glutamyl-gamma-aminobutyrate. The protein is Gamma-glutamyl-gamma-aminobutyrate hydrolase PuuD (puuD) of Escherichia coli (strain K12).